The chain runs to 450 residues: Chromosomal replication initiator protein DnaA (450 aa).

Residues 1–73 (MNTKELWIEV…KNILKKLTGI (73 aa)) form a domain I, interacts with DnaA modulators region. A domain II region spans residues 73 to 104 (IQYNISFELEKNINKQASVISKIDTLTENNNL). The tract at residues 105–326 (AYYENYTFEN…GAIKRLLFLA (222 aa)) is domain III, AAA+ region. ATP-binding residues include G149, G151, K152, and T153. The interval 327-450 (VMNKKPNEII…NAIRRKIEGR (124 aa)) is domain IV, binds dsDNA.

Belongs to the DnaA family. Oligomerizes as a right-handed, spiral filament on DNA at oriC.

It localises to the cytoplasm. In terms of biological role, plays an essential role in the initiation and regulation of chromosomal replication. ATP-DnaA binds to the origin of replication (oriC) to initiate formation of the DNA replication initiation complex once per cell cycle. Binds the DnaA box (a 9 base pair repeat at the origin) and separates the double-stranded (ds)DNA. Forms a right-handed helical filament on oriC DNA; dsDNA binds to the exterior of the filament while single-stranded (ss)DNA is stabiized in the filament's interior. The ATP-DnaA-oriC complex binds and stabilizes one strand of the AT-rich DNA unwinding element (DUE), permitting loading of DNA polymerase. After initiation quickly degrades to an ADP-DnaA complex that is not apt for DNA replication. Binds acidic phospholipids. This Spiroplasma citri protein is Chromosomal replication initiator protein DnaA.